The primary structure comprises 302 residues: tRNA dimethylallyltransferase (302 aa).

Gly-10 to Ser-17 contacts ATP. Thr-12–Ser-17 is a substrate binding site. An interaction with substrate tRNA region spans residues Asp-35–Gln-38.

The protein belongs to the IPP transferase family. Monomer. Requires Mg(2+) as cofactor.

It carries out the reaction adenosine(37) in tRNA + dimethylallyl diphosphate = N(6)-dimethylallyladenosine(37) in tRNA + diphosphate. Its function is as follows. Catalyzes the transfer of a dimethylallyl group onto the adenine at position 37 in tRNAs that read codons beginning with uridine, leading to the formation of N6-(dimethylallyl)adenosine (i(6)A). This Acaryochloris marina (strain MBIC 11017) protein is tRNA dimethylallyltransferase.